The chain runs to 171 residues: Small ribosomal subunit protein uS5 (171 aa).

The region spanning 15–78 is the S5 DRBM domain; the sequence is LKDRLVAINR…EAAKKNLTRV (64 aa).

This sequence belongs to the universal ribosomal protein uS5 family. As to quaternary structure, part of the 30S ribosomal subunit. Contacts proteins S4 and S8.

Functionally, with S4 and S12 plays an important role in translational accuracy. Its function is as follows. Located at the back of the 30S subunit body where it stabilizes the conformation of the head with respect to the body. In Phocaeicola vulgatus (strain ATCC 8482 / DSM 1447 / JCM 5826 / CCUG 4940 / NBRC 14291 / NCTC 11154) (Bacteroides vulgatus), this protein is Small ribosomal subunit protein uS5.